A 541-amino-acid chain; its full sequence is Chaperonin GroEL 2 (541 aa).

Residues Thr29–Pro32, Asp86–Thr90, Gly413, Asn476–Ala478, and Asp492 each bind ATP.

Belongs to the chaperonin (HSP60) family. As to quaternary structure, forms a cylinder of 14 subunits composed of two heptameric rings stacked back-to-back. Interacts with the co-chaperonin GroES.

The protein resides in the secreted. It is found in the capsule. The protein localises to the cell surface. Its subcellular location is the cell wall. It carries out the reaction ATP + H2O + a folded polypeptide = ADP + phosphate + an unfolded polypeptide.. Functionally, together with its co-chaperonin GroES, plays an essential role in assisting protein folding. The GroEL-GroES system forms a nano-cage that allows encapsulation of the non-native substrate proteins and provides a physical environment optimized to promote and accelerate protein folding. The polypeptide is Chaperonin GroEL 2 (Mycobacterium leprae (strain TN)).